A 555-amino-acid chain; its full sequence is 2-succinyl-5-enolpyruvyl-6-hydroxy-3-cyclohexene-1-carboxylate synthase (555 aa).

The protein belongs to the TPP enzyme family. MenD subfamily. As to quaternary structure, homodimer. Mg(2+) serves as cofactor. Requires Mn(2+) as cofactor. It depends on thiamine diphosphate as a cofactor.

It catalyses the reaction isochorismate + 2-oxoglutarate + H(+) = 5-enolpyruvoyl-6-hydroxy-2-succinyl-cyclohex-3-ene-1-carboxylate + CO2. It functions in the pathway quinol/quinone metabolism; 1,4-dihydroxy-2-naphthoate biosynthesis; 1,4-dihydroxy-2-naphthoate from chorismate: step 2/7. It participates in quinol/quinone metabolism; menaquinone biosynthesis. Catalyzes the thiamine diphosphate-dependent decarboxylation of 2-oxoglutarate and the subsequent addition of the resulting succinic semialdehyde-thiamine pyrophosphate anion to isochorismate to yield 2-succinyl-5-enolpyruvyl-6-hydroxy-3-cyclohexene-1-carboxylate (SEPHCHC). This is 2-succinyl-5-enolpyruvyl-6-hydroxy-3-cyclohexene-1-carboxylate synthase from Cronobacter sakazakii (strain ATCC BAA-894) (Enterobacter sakazakii).